Consider the following 371-residue polypeptide: Protein maelstrom 1 (371 aa).

A DNA-binding region (HMG box) is located at residues 2 to 68 (AQNKPNAFMA…VLERESKTER (67 aa)).

Belongs to the maelstrom family.

It localises to the cytoplasm. Its subcellular location is the nucleus. Involved both in the piRNA and miRNA metabolic processes. As a component of the meiotic nuage, plays a central role during oogenesis by repressing transposable elements and preventing their mobilization, which is essential for the germline integrity. Repression of transposable elements is mediated via the piRNA metabolic process, which mediates the repression of transposable elements during meiosis by forming complexes composed of piRNAs and Piwi proteins and governs the repression of transposons. As a nuclear component, it is required for proper differentiation in the germline stem cell (GSC) lineage by repressing microRNA-7 (miR-7), thereby acting as an indirect regulator of bag-of-marbles (Bam). Acts by binding to the promoter of miR-7 gene and repressing its expression; miR-7 repression alleviates the Bam repression by miR-7, thereby allowing differentiation in the germline stem cell (GSC) lineage. This is Protein maelstrom 1 (mael1) from Drosophila pseudoobscura pseudoobscura (Fruit fly).